The sequence spans 229 residues: Large ribosomal subunit protein uL1 (229 aa).

The protein belongs to the universal ribosomal protein uL1 family. In terms of assembly, part of the 50S ribosomal subunit.

Functionally, binds directly to 23S rRNA. The L1 stalk is quite mobile in the ribosome, and is involved in E site tRNA release. Its function is as follows. Protein L1 is also a translational repressor protein, it controls the translation of the L11 operon by binding to its mRNA. This Streptococcus thermophilus (strain CNRZ 1066) protein is Large ribosomal subunit protein uL1.